The chain runs to 662 residues: Retaining alpha-galactosidase (662 aa).

Positions 1–19 (MKKLTFLLLCVLCTLSLQA) are cleaved as a signal peptide. Glu174 is a Ca(2+) binding site. Asp415 functions as the Nucleophile in the catalytic mechanism. 2 residues coordinate Ca(2+): Glu464 and Glu470. Glu470 (proton donor/acceptor) is an active-site residue.

Belongs to the glycosyl hydrolase 97 family. Monomer. It depends on Ca(2+) as a cofactor.

It catalyses the reaction Hydrolysis of terminal, non-reducing alpha-D-galactose residues in alpha-D-galactosides, including galactose oligosaccharides, galactomannans and galactolipids.. Its activity is regulated as follows. Inhibited by EDTA in vitro. Galactosidase that is able to hydrolyze the alpha-1,6 disaccharide melibiose and the synthetic p-nitrophenyl alpha-galactoside substrate (pNP-Gal), with retention of the anomeric configuration. Does not hydrolyze DNP-Glc or pNP-Glc. The sequence is that of Retaining alpha-galactosidase from Bacteroides thetaiotaomicron (strain ATCC 29148 / DSM 2079 / JCM 5827 / CCUG 10774 / NCTC 10582 / VPI-5482 / E50).